A 65-amino-acid polypeptide reads, in one-letter code: Ovary maturating parsin (65 aa).

The segment covering 17–28 has biased composition (low complexity); that stretch reads PAAPAVAPAAPA. Residues 17-36 form a disordered region; it reads PAAPAVAPAAPASWPHQQRR.

Monomer.

Functionally, neurohormone that anticipates ovarian maturation. Acts as a true gonadotropin and stimulates vitellogenin biosynthesis. This chain is Ovary maturating parsin, found in Locusta migratoria (Migratory locust).